We begin with the raw amino-acid sequence, 244 residues long: MSAAAYMDFVAAQCLVSISNRAAVPEHGGAPDAERLRLPEREVTKEHGDPGDTWKDYCTLVTIAKSLLDLNKYRPIQTPSVCSDSLESPDEDMGSDSDVTTESGSSPSHSPEERQDPGSAPSPLSLLHPGVAAKGKHASEKRHKCPYSGCGKVYGKSSHLKAHYRVHTGERPFPCTWPDCLKKFSRSDELTRHYRTHTGEKQFRCPLCEKRFMRSDHLTKHARRHTEFHPSMIKRSKKALANPL.

2 disordered regions span residues 24-51 (VPEH…GDPG) and 80-142 (SVCS…SEKR). Residues 32 to 51 (DAERLRLPEREVTKEHGDPG) show a composition bias toward basic and acidic residues. Serine 122 is subject to Phosphoserine. 3 C2H2-type zinc fingers span residues 143–167 (HKCP…YRVH), 173–197 (FPCT…YRTH), and 203–225 (FRCP…ARRH).

Belongs to the Sp1 C2H2-type zinc-finger protein family. Interacts with ZZEF1.

It localises to the nucleus. In terms of biological role, transcription factor that binds to GC box promoter elements. Selectively activates mRNA synthesis from genes containing tandem repeats of GC boxes but represses genes with a single GC box. Acts as an epidermal circadian transcription factor regulating keratinocyte proliferation. This chain is Krueppel-like factor 9 (KLF9), found in Sus scrofa (Pig).